The sequence spans 44 residues: Large ribosomal subunit protein P2 (44 aa).

Position 1 is an N-acetylmethionine (Met-1). 2 positions are modified to phosphoserine: Ser-17 and Ser-19. The residue at position 21 (Lys-21) is an N6-acetyllysine; alternate. Lys-21 is subject to N6-succinyllysine; alternate.

It belongs to the eukaryotic ribosomal protein P1/P2 family. In terms of assembly, heterodimer with RPLP1 at the lateral ribosomal stalk of the large ribosomal subunit. In terms of processing, phosphorylated.

In terms of biological role, plays an important role in the elongation step of protein synthesis. The polypeptide is Large ribosomal subunit protein P2 (RPLP2) (Oryctolagus cuniculus (Rabbit)).